The sequence spans 182 residues: Isopentenyl-diphosphate Delta-isomerase (182 aa).

Residues histidine 25 and histidine 32 each contribute to the Mn(2+) site. The region spanning 30–164 is the Nudix hydrolase domain; that stretch reads RLHLAFSSWL…PWAFSPWMVM (135 aa). Residue cysteine 67 is part of the active site. Histidine 69 contacts Mn(2+). A Mg(2+)-binding site is contributed by glutamate 87. Residues glutamate 114 and glutamate 116 each coordinate Mn(2+). The active site involves glutamate 116.

The protein belongs to the IPP isomerase type 1 family. As to quaternary structure, homodimer. Mg(2+) is required as a cofactor. It depends on Mn(2+) as a cofactor.

It is found in the cytoplasm. It carries out the reaction isopentenyl diphosphate = dimethylallyl diphosphate. It functions in the pathway isoprenoid biosynthesis; dimethylallyl diphosphate biosynthesis; dimethylallyl diphosphate from isopentenyl diphosphate: step 1/1. Catalyzes the 1,3-allylic rearrangement of the homoallylic substrate isopentenyl (IPP) to its highly electrophilic allylic isomer, dimethylallyl diphosphate (DMAPP). This Escherichia coli O139:H28 (strain E24377A / ETEC) protein is Isopentenyl-diphosphate Delta-isomerase.